The sequence spans 254 residues: 4-hydroxy-tetrahydrodipicolinate reductase (254 aa).

NAD(+) contacts are provided by residues 8 to 13 (GASGKM), 87 to 89 (GTT), and 111 to 114 (ATNM). His143 (proton donor/acceptor) is an active-site residue. (S)-2,3,4,5-tetrahydrodipicolinate is bound at residue His144. Lys147 serves as the catalytic Proton donor. (S)-2,3,4,5-tetrahydrodipicolinate is bound at residue 153-154 (GT).

Belongs to the DapB family.

The protein resides in the cytoplasm. It carries out the reaction (S)-2,3,4,5-tetrahydrodipicolinate + NAD(+) + H2O = (2S,4S)-4-hydroxy-2,3,4,5-tetrahydrodipicolinate + NADH + H(+). The catalysed reaction is (S)-2,3,4,5-tetrahydrodipicolinate + NADP(+) + H2O = (2S,4S)-4-hydroxy-2,3,4,5-tetrahydrodipicolinate + NADPH + H(+). The protein operates within amino-acid biosynthesis; L-lysine biosynthesis via DAP pathway; (S)-tetrahydrodipicolinate from L-aspartate: step 4/4. Catalyzes the conversion of 4-hydroxy-tetrahydrodipicolinate (HTPA) to tetrahydrodipicolinate. This chain is 4-hydroxy-tetrahydrodipicolinate reductase, found in Campylobacter curvus (strain 525.92).